Reading from the N-terminus, the 445-residue chain is 3-phosphoshikimate 1-carboxyvinyltransferase (445 aa).

Residues 1–20 show a composition bias toward polar residues; that stretch reads MSSTHPGRTIRSGATQNLSG. The disordered stretch occupies residues 1-24; sequence MSSTHPGRTIRSGATQNLSGTIRP. Residues Lys28, Ser29, and Arg33 each coordinate 3-phosphoshikimate. Residue Lys28 participates in phosphoenolpyruvate binding. Positions 101 and 129 each coordinate phosphoenolpyruvate. Ser174, Gln176, Asp322, and Lys349 together coordinate 3-phosphoshikimate. Position 176 (Gln176) interacts with phosphoenolpyruvate. Residue Asp322 is the Proton acceptor of the active site. Positions 353 and 397 each coordinate phosphoenolpyruvate.

This sequence belongs to the EPSP synthase family. Monomer.

It localises to the cytoplasm. The enzyme catalyses 3-phosphoshikimate + phosphoenolpyruvate = 5-O-(1-carboxyvinyl)-3-phosphoshikimate + phosphate. Its pathway is metabolic intermediate biosynthesis; chorismate biosynthesis; chorismate from D-erythrose 4-phosphate and phosphoenolpyruvate: step 6/7. In terms of biological role, catalyzes the transfer of the enolpyruvyl moiety of phosphoenolpyruvate (PEP) to the 5-hydroxyl of shikimate-3-phosphate (S3P) to produce enolpyruvyl shikimate-3-phosphate and inorganic phosphate. This Magnetococcus marinus (strain ATCC BAA-1437 / JCM 17883 / MC-1) protein is 3-phosphoshikimate 1-carboxyvinyltransferase.